Consider the following 478-residue polypeptide: Lipoprotein lipase (478 aa).

The N-terminal stretch at 1–27 (MESKALLLVALSVWLQSLIVSREGLAT) is a signal peptide. An interaction with GPIHBP1 region spans residues 35–56 (RDFTDIESKFALRTPEDTVEDT). Cysteines 57 and 70 form a disulfide. Residue Asn73 is glycosylated (N-linked (GlcNAc...) asparagine). Tyr124 bears the 3'-nitrotyrosine mark. Ser162 serves as the catalytic Nucleophile. Catalysis depends on Asp186, which acts as the Charge relay system. Tyr194 bears the 3'-nitrotyrosine mark. Positions 197, 200, 202, and 205 each coordinate Ca(2+). A disulfide bridge connects residues Cys246 and Cys269. The essential for determining substrate specificity stretch occupies residues 246–269 (CNIGEAIRVIAERGLGDVDQLVKC). His271 serves as the catalytic Charge relay system. 2 disulfides stabilise this stretch: Cys294–Cys313 and Cys305–Cys308. The PLAT domain occupies 344–467 (FHYQVKMRFS…KGKSSVVFVK (124 aa)). 3'-nitrotyrosine is present on Tyr346. The N-linked (GlcNAc...) asparagine glycan is linked to Asn389. The important for interaction with lipoprotein particles stretch occupies residues 420–424 (WSNWW). Residues 433-437 (KIRVK) are important for heparin binding. The tract at residues 446–470 (IFCSREKKSHLQKGKSSVVFVKCHD) is interaction with GPIHBP1. Residues Cys448 and Cys468 are joined by a disulfide bond.

This sequence belongs to the AB hydrolase superfamily. Lipase family. In terms of assembly, homodimer. Interacts with GPIHBP1 with 1:1 stoichiometry. Interacts with APOC2; the interaction activates LPL activity in the presence of lipids. Interaction with heparan sulfate proteoglycans is required to protect LPL against loss of activity. Associates with lipoprotein particles in blood plasma. Interacts with LMF1 and SEL1L; interaction with SEL1L is required to prevent aggregation of newly synthesized LPL in the endoplasmic reticulum (ER), and for normal export of LPL from the ER to the extracellular space. Interacts with SORL1; SORL1 acts as a sorting receptor, promoting LPL localization to endosomes and later to lysosomes, leading to degradation of newly synthesized LPL. In terms of processing, tyrosine nitration after lipopolysaccharide (LPS) challenge down-regulates the lipase activity.

The protein resides in the cell membrane. Its subcellular location is the secreted. It localises to the extracellular space. The protein localises to the extracellular matrix. The enzyme catalyses a triacylglycerol + H2O = a diacylglycerol + a fatty acid + H(+). It catalyses the reaction a 1,2-diacyl-sn-glycero-3-phosphocholine + H2O = a 2-acyl-sn-glycero-3-phosphocholine + a fatty acid + H(+). The catalysed reaction is 1,2,3-tri-(9Z-octadecenoyl)-glycerol + H2O = di-(9Z)-octadecenoylglycerol + (9Z)-octadecenoate + H(+). It carries out the reaction 1,2-di-(9Z-octadecenoyl)-sn-glycero-3-phosphocholine + H2O = (9Z-octadecenoyl)-sn-glycero-3-phosphocholine + (9Z)-octadecenoate + H(+). The enzyme catalyses 1,2,3-tributanoylglycerol + H2O = dibutanoylglycerol + butanoate + H(+). It catalyses the reaction 1,2-dihexadecanoyl-sn-glycero-3-phosphocholine + H2O = hexadecanoyl-sn-glycero-3-phosphocholine + hexadecanoate + H(+). With respect to regulation, the apolipoprotein APOC2 acts as a coactivator of LPL activity. Ca(2+) binding promotes protein stability and formation of the active homodimer. Interaction with GPIHBP1 protects LPL against inactivation by ANGPTL4. In terms of biological role, key enzyme in triglyceride metabolism. Catalyzes the hydrolysis of triglycerides from circulating chylomicrons and very low density lipoproteins (VLDL), and thereby plays an important role in lipid clearance from the blood stream, lipid utilization and storage. Although it has both phospholipase and triglyceride lipase activities it is primarily a triglyceride lipase with low but detectable phospholipase activity. Mediates margination of triglyceride-rich lipoprotein particles in capillaries. Recruited to its site of action on the luminal surface of vascular endothelium by binding to GPIHBP1 and cell surface heparan sulfate proteoglycans. The sequence is that of Lipoprotein lipase (LPL) from Sus scrofa (Pig).